The primary structure comprises 223 residues: Urease accessory protein UreF (223 aa).

It belongs to the UreF family. UreD, UreF and UreG form a complex that acts as a GTP-hydrolysis-dependent molecular chaperone, activating the urease apoprotein by helping to assemble the nickel containing metallocenter of UreC. The UreE protein probably delivers the nickel.

It is found in the cytoplasm. In terms of biological role, required for maturation of urease via the functional incorporation of the urease nickel metallocenter. The protein is Urease accessory protein UreF of Rhizobium etli (strain CIAT 652).